The following is a 138-amino-acid chain: Nucleoside diphosphate kinase (138 aa).

The ATP site is built by lysine 9, phenylalanine 57, arginine 85, threonine 91, arginine 102, and asparagine 112. Catalysis depends on histidine 115, which acts as the Pros-phosphohistidine intermediate.

This sequence belongs to the NDK family. As to quaternary structure, homotetramer. Mg(2+) serves as cofactor.

Its subcellular location is the cytoplasm. The catalysed reaction is a 2'-deoxyribonucleoside 5'-diphosphate + ATP = a 2'-deoxyribonucleoside 5'-triphosphate + ADP. It catalyses the reaction a ribonucleoside 5'-diphosphate + ATP = a ribonucleoside 5'-triphosphate + ADP. Major role in the synthesis of nucleoside triphosphates other than ATP. The ATP gamma phosphate is transferred to the NDP beta phosphate via a ping-pong mechanism, using a phosphorylated active-site intermediate. The sequence is that of Nucleoside diphosphate kinase from Deinococcus deserti (strain DSM 17065 / CIP 109153 / LMG 22923 / VCD115).